The sequence spans 634 residues: Hyphal wall protein 1 (634 aa).

The N-terminal stretch at 1–27 (MRLSTAQLIAIAYYMLSIGATVPQVDG) is a signal peptide. Disordered stretches follow at residues 40–307 (SYDY…TTTT) and 412–570 (CPLT…SGAI). Residues 42–114 (DYYQEPCDDY…DYPQQPQEPC (73 aa)) show a composition bias toward low complexity. One copy of the 1; approximate repeat lies at 46-58 (EPCDDYPQQQQQQ). The interval 46 to 187 (EPCDDYPQQQ…PNIPTDWIPD (142 aa)) is 14 X 10 AA tandem repeats of [EVIQ]-P-[CDT]-D-[YNW]-P-[PQ]-[QI]-[QP]-[QDN]. The 2; approximate repeat unit spans residues 59 to 69 (EPCDYPQQQQQ). The stretch at 70–81 (EEPCDYPQQQPQ) is one 3; approximate repeat. Tandem repeats lie at residues 82–91 (EPCDYPQQPQ), 92–101 (EPCDYPQQPQ), 102–111 (EPCDYPQQPQ), 112–121 (EPCDNPPQPD), 122–131 (VPCDNPPQPD), 132–141 (VPCDNPPQPD), 142–151 (VPCDNPPQPD), 152–161 (VPCDNPPQPD), and 162–171 (QPDDNPPIPN). Residues 115-171 (DNPPQPDVPCDNPPQPDVPCDNPPQPDVPCDNPPQPDVPCDNPPQPDQPDDNPPIPN) are compositionally biased toward pro residues. The stretch at 172 to 179 (IPTDWIPN) is one 13; truncated repeat. Composition is skewed to low complexity over residues 172-183 (IPTDWIPNIPTD) and 193-307 (TTPA…TTTT). Residues 180-187 (IPTDWIPD) form a 14; truncated repeat. Residues Asn-241 and Asn-286 are each glycosylated (N-linked (GlcNAc...) asparagine). Positions 415-426 (TENTPGTDSTPE) are enriched in polar residues. The span at 508–550 (ETKPAAPKSSAPATEPSPVAPGTESAPAGPGASSSPKSSVLAS) shows a compositional bias: low complexity. Asn-601 carries N-linked (GlcNAc...) asparagine glycosylation. Gly-613 carries the GPI-anchor amidated glycine lipid modification. A propeptide spans 614 to 634 (AGNNMRLTFGAAIIGIAAFLI) (removed in mature form).

This sequence belongs to the HWP1 family. In terms of processing, the GPI-anchor is attached to the protein in the endoplasmic reticulum and serves to target the protein to the cell surface. There, the glucosamine-inositol phospholipid moiety is cleaved off and the GPI-modified mannoprotein is covalently attached via its lipidless GPI glycan remnant to the 1,6-beta-glucan of the outer cell wall layer. Post-translationally, serves as a substrate for mammalian transglutaminases which are necessary for cross-linking between HWP1 and host epithelial cells. Also predicted to be a substrate for cleavage by KEX2. N- and O-glycosylated.

The protein localises to the secreted. The protein resides in the cell wall. It is found in the membrane. Functionally, major hyphal cell wall protein which plays a role of adhesin and is required for mating, normal hyphal development, cell-to-cell adhesive functions necessary for biofilm integrity, attachment to host, and virulence. Promotes interactions with host and bacterial molecules, thus leading to effective colonization within polymicrobial communities. Plays a crucial role in gastrointestinal colonization, in mucosal symptomatic and asymptomatic infections, in vaginitis, as well as in lethal oroesophageal candidiasis, caused by the combined action of fungal virulence factors and host inflammatory responses when protective immunity is absent. The chain is Hyphal wall protein 1 (HWP1) from Candida albicans (strain SC5314 / ATCC MYA-2876) (Yeast).